We begin with the raw amino-acid sequence, 782 residues long: MGKRDRADRDKKKSRKRHYEDEEDDEEDAPGNDPQEAVPSAAGKQVDESGTKVDEYGAKDYRLQMPLKDDHTSRPLWVAPDGHIFLEAFSPVYKYAQDFLVAIAEPVCRPTHVHEYKLTAYSLYAAVSVGLQTSDITEYLRKLSKTGVPDGIMQFIKLCTVSYGKVKLVLKHNRYFVESSHPDVIQHLLQDPVIRECRLRNSEGEATELITETFTSKSAISKTAEGSGGPSTSRVTDPQGKSDIPMDLFDFYEQMDKDEEEEEETQTVSFEVKQEMIEELQKRCIHLEYPLLAEYDFRNDSVNPDINIDLKPTAVLRPYQEKSLRKMFGNGRARSGVIVLPCGAGKSLVGVTAACTVRKRCLVLGNSAVSVEQWKAQFKMWSTIDDSQICRFTSDAKDKPIGCSVAISTYSMLGHTTKRSWEAERVMEWLKTQEWGLMILDEVHTIPAKMFRRVLTIVQAHCKLGLTATLVREDDKIVDLNFLIGPKLYEANWMELQNNGYIAKVQCAEVWCPMSPEFYREYVAIKTKKRILLYTMNPNKFRACQFLIKFHERRNDKIIVFADNVFALKEYAIRLNKPYIYGPTSQGERMQILQNFKHNPKINTIFISKVGDTSFDLPEANVLIQISSHGGSRRQEAQRLGRVLRAKKGMVAEEYNAFFYSLVSQDTQEMAYSTKRQRFLVDQGYSFKVITKLAGMEEEDLAFSTKEEQQQLLQKVLAATDLDAEEEVVAGEFGSRSSQASRRFGTMSSMSGADDTVYMEYHSSRSKAPSKHVHPLFKRFRK.

Residues M1–K11 show a composition bias toward basic and acidic residues. Disordered stretches follow at residues M1 to T51 and I220 to G240. The Nuclear localization signal signature appears at R6–H18. Acidic residues predominate over residues D21–P30. A Helicase ATP-binding domain is found at M327–L488. Residue L340–S347 coordinates ATP. The DEVH box motif lies at D441 to H444. Positions R542–A702 constitute a Helicase C-terminal domain. Position 686 is a phosphoserine (S686). S751 is subject to Phosphoserine; by CK2.

The protein belongs to the helicase family. RAD25/XPB subfamily. Component of the 7-subunit TFIIH core complex composed of XPB/ERCC3, XPD/ERCC2, GTF2H1, GTF2H2, GTF2H3, GTF2H4 and GTF2H5, which is active in NER. The core complex associates with the 3-subunit CDK-activating kinase (CAK) module composed of CCNH/cyclin H, CDK7 and MNAT1 to form the 10-subunit holoenzyme (holo-TFIIH) active in transcription. Interacts with PUF60. Interacts with ATF7IP. Interacts with KAT2A; leading to KAT2A recruitment to promoters and acetylation of histones. Part of TBP-based Pol II pre-initiation complex (PIC), in which Pol II core assembles with general transcription factors and other specific initiation factors including GTF2E1, GTF2E2, GTF2F1, GTF2F2, TCEA1, ERCC2, ERCC3, GTF2H2, GTF2H3, GTF2H4, GTF2H5, GTF2A1, GTF2A2, GTF2B and TBP; this large multi-subunit PIC complex mediates DNA unwinding and targets Pol II core to the transcription start site where the first phosphodiester bond forms. Phosphorylation on Ser-751 by CK2 controls the 5'-excision activity of ERCC1-XPF endonuclease; phosphorylated protein inhibits the excision activity and thus NER. Dephosphorylation reactivates the 5'-excision step. Phosphorylation has no effect on transcription or the 3'-5' helicase activity.

It localises to the nucleus. The enzyme catalyses Couples ATP hydrolysis with the unwinding of duplex DNA by translocating in the 3'-5' direction.. The catalysed reaction is ATP + H2O = ADP + phosphate + H(+). Its activity is regulated as follows. Phosphorylation on Ser-751 by CK2 controls the 5'-excision activity of ERCC1-XPF endonuclease; phosphorylated protein inhibits the excision activity and thus NER. ATPase activity is stimulated by TFIIH subunit p52 (GTF2H4). DNA translocase activity by this subunit in TFIIH is stimulated by XPA, ERCC5/XPG and XFP plus ERCC1. In terms of biological role, ATP-dependent 3'-5' DNA helicase/translocase; binds dsDNA rather than ssDNA, unzipping it in a translocase rather than classical helicase activity. Component of the general transcription and DNA repair factor IIH (TFIIH) core complex. When complexed to CDK-activating kinase (CAK), involved in RNA transcription by RNA polymerase II. The ATPase activity of XPB/ERCC3, but not its helicase activity, is required for DNA opening; it may wrap around the damaged DNA wedging it open, causing localized melting and twisting that allows XPD/ERCC2 helicase to anchor. The ATP-dependent helicase activity of XPB/ERCC3 may be required for promoter escape. Also involved in transcription-coupled nucleotide excision repair (NER) of damaged DNA. In NER, TFIIH acts by opening DNA around the lesion to allow the excision of the damaged oligonucleotide and its replacement by a new DNA fragment. The structure of the TFIIH transcription complex differs from the NER-TFIIH complex; large movements by XPD/ERCC2 and XPB/ERCC3 are stabilized by XPA. The polypeptide is General transcription and DNA repair factor IIH helicase/translocase subunit XPB (ERCC3) (Macaca fascicularis (Crab-eating macaque)).